The primary structure comprises 239 residues: Claudin-14 (239 aa).

Over 1 to 7 (MASTAVQ) the chain is Cytoplasmic. Residues 8 to 28 (LLGFLLSFLGMVGTLITTILP) form a helical membrane-spanning segment. Residues 29-81 (HWRRTAHVGTNILTAVSYLKGLWMECVWHSTGIYQCQIYRSLLALPRDLQAAR) are Extracellular-facing. The chain crosses the membrane as a helical span at residues 82–102 (ALMVISCLLSGMACACAVVGM). Topologically, residues 103–115 (KCTRCAKGTPAKT) are cytoplasmic. Residues 116–136 (TFAVLGGALFLLAGLLCMVAV) traverse the membrane as a helical segment. Residues 137-162 (SWTTNDVVQNFYNPLLPSGMKFEIGQ) lie on the Extracellular side of the membrane. Residues 163–183 (ALYLGFISSSLSLIGGTLLCL) traverse the membrane as a helical segment. Residues 184–239 (SCQDEAPYRPYPPQSRAGATTTATAPAYRPPAAYKDNRAPSVTSAAHSGYRLNDYV) are Cytoplasmic-facing.

It belongs to the claudin family. As to expression, expressed in all sensory epithelia of the inner ear vestibular organs, as well as in liver and kidney.

Its subcellular location is the cell junction. The protein localises to the tight junction. It localises to the cell membrane. Functionally, plays a major role in tight junction-specific obliteration of the intercellular space, through calcium-independent cell-adhesion activity. The polypeptide is Claudin-14 (Cldn14) (Mus musculus (Mouse)).